The sequence spans 636 residues: Threonine--tRNA ligase (636 aa).

A TGS domain is found at 1–59; that stretch reads MPIITLPDGTKKIFEQVVSVEQVAKSMGLVKAALAGEVDGELVSTSFLIKTDANLTIIT. Residues 240 to 531 are catalytic; it reads DHRKIGKTQD…LIEHYEGAYP (292 aa). Cys-331, His-382, and His-508 together coordinate Zn(2+).

This sequence belongs to the class-II aminoacyl-tRNA synthetase family. In terms of assembly, homodimer. The cofactor is Zn(2+).

It localises to the cytoplasm. It carries out the reaction tRNA(Thr) + L-threonine + ATP = L-threonyl-tRNA(Thr) + AMP + diphosphate + H(+). Functionally, catalyzes the attachment of threonine to tRNA(Thr) in a two-step reaction: L-threonine is first activated by ATP to form Thr-AMP and then transferred to the acceptor end of tRNA(Thr). Also edits incorrectly charged L-seryl-tRNA(Thr). In Vesicomyosocius okutanii subsp. Calyptogena okutanii (strain HA), this protein is Threonine--tRNA ligase.